The chain runs to 465 residues: Ras GTPase-activating protein-binding protein 1 (465 aa).

Positions 11 to 133 (VGREFVRQYY…FYVHNDIFRY (123 aa)) constitute an NTF2 domain. Residues Lys36, Lys50, Lys59, Lys64, Lys76, and Lys123 each participate in a glycyl lysine isopeptide (Lys-Gly) (interchain with G-Cter in ubiquitin) cross-link. Positions 142–224 (ITEPQEESEE…EPVLEETAPE (83 aa)) are acidic disordered region. At Thr143 the chain carries Phosphothreonine. Acidic residues-rich tracts occupy residues 145-157 (PQEESEEEVEEPE) and 184-205 (EHLEEPVAEPEPEPEPEPEQEP). The disordered stretch occupies residues 145–242 (PQEESEEEVE…APADIAQTVQ (98 aa)). The residue at position 149 (Ser149) is a Phosphoserine. Ser230, Ser231, Ser249, and Ser252 each carry phosphoserine. A disordered region spans residues 254 to 326 (TSKNLPPSGA…PVREAGEQGD (73 aa)). 2 stretches are compositionally biased toward basic and acidic residues: residues 296–306 (PQRDQRVREQR) and 317–326 (PVREAGEQGD). An RRM domain is found at 339–414 (HQLFIGNLPH…VRLNVEEKKT (76 aa)). Residues Lys352 and Lys356 each participate in a glycyl lysine isopeptide (Lys-Gly) (interchain with G-Cter in ubiquitin) cross-link. Ser372 is modified (phosphoserine). Residue Lys375 forms a Glycyl lysine isopeptide (Lys-Gly) (interchain with G-Cter in ubiquitin) linkage. Lys375 carries the N6-acetyllysine; alternate modification. Residue Lys375 forms a Glycyl lysine isopeptide (Lys-Gly) (interchain with G-Cter in SUMO2); alternate linkage. Lys392 is covalently cross-linked (Glycyl lysine isopeptide (Lys-Gly) (interchain with G-Cter in ubiquitin); alternate). Residues 409 to 465 (VEEKKTRAAREGDRRDNRLRGPGGPRGGLGGGMRGPPRGGMVQKPGFGVGRSIAPRQ) are RG-rich region. Residues 412–427 (KKTRAAREGDRRDNRL) are compositionally biased toward basic and acidic residues. A disordered region spans residues 412–465 (KKTRAAREGDRRDNRLRGPGGPRGGLGGGMRGPPRGGMVQKPGFGVGRSIAPRQ). Arg428 bears the Asymmetric dimethylarginine mark. Gly residues predominate over residues 429–446 (GPGGPRGGLGGGMRGPPR). The residue at position 434 (Arg434) is an Asymmetric dimethylarginine; alternate. Omega-N-methylarginine; alternate occurs at positions 434, 446, 459, and 464. Residue Arg459 is modified to Dimethylated arginine; alternate.

In terms of assembly, homodimer and oligomer. Component of a TAU mRNP complex, at least composed of IGF2BP1, ELAVL4 and G3BP1. Binds to the SH3 domain of Ras GTPase-activating protein (RASA1) in proliferating cells. No interaction in quiescent cells. Interacts (via NTF2 domain) with USP10; inhibiting stress granule formation by lowering G3BP1 valence. Interacts (via NTF2 domain) with CAPRIN1; promoting stress granule formation by lowering the saturation-concentration of G3BP1. Interacts (via NTF2 domain) with UBAP2L; promoting stress granule formation. Associates (via RG-rich region) with 40S ribosome subunits. Interacts with RPTOR and SPAG5; this complex is increased by oxidative stress. Interacts with ATXN2L. Interacts with STYXL1. Interacts with CGAS (via N-terminus); this interaction promotes the DNA-binding and activation of CGAS. Interacts (via C-terminus) with RIGI. Interacts with PABPC1. Interacts with QKI (isoforms QKI6 and QKI7); directing N(7)-methylguanine-containing mRNAs to stress granules. It depends on Mg(2+) as a cofactor. Post-translationally, phosphorylation of the acidic disordered region regulates stress granule assembly. RASA1-dependent phosphorylation of Ser-149 induces a conformational change that prevents self-association. Dephosphorylation after HRAS activation is required for stress granule assembly. Ser-149 phosphorylation induces partial nuclear localization. In terms of processing, arg-435 is dimethylated, probably to asymmetric dimethylarginine. Ubiquitinated by TRIM21 via 'Lys-63'-linked polyubiquitination in the NTF2 domain in response to heat shock, leading to stress granule disassembly: ubiquitination promotes interaction with the FAF2 adapter, followed by interaction with VCP, which extracts G3BP1 from stress granules, leading to stress granule disassembly. In case of prolonged stress, ubiquitination by TRIM21 leads to autophagy-dependent degradation of G3BP1 via recruitment of ubiquitinated G3BP1 by SQSTM1 and/or CALCOCO2 to autophagosomes.

The protein resides in the cytoplasm. It is found in the cytosol. It localises to the perikaryon. Its subcellular location is the stress granule. The protein localises to the nucleus. It carries out the reaction ATP + H2O = ADP + phosphate + H(+). Under physiological conditions, G3BP1 adopts a compact state that is stabilized by intramolecular interactions between the RG-rich and the acidic regions that inhibit phase separation. Upon stress, polysomes disassemble and mRNAs are released in an unfolded protein-free state. Binding of unfolded mRNA to G3BP1 outcompetes the intramolecular interactions and RNA-bound G3BP1 adopts an expanded conformation in which the RG-rich region becomes exposed to engage in protein-protein and protein-RNA interactions, allowing physical cross-linking of RNA molecules to form protein-RNA condensates, leading to liquid-liquid phase separation (LLPS). Protein involved in various processes, such as stress granule formation and innate immunity. Plays an essential role in stress granule formation. Stress granules are membraneless compartments that store mRNAs and proteins, such as stalled translation pre-initiation complexes, in response to stress. Promotes formation of stress granules phase-separated membraneless compartment by undergoing liquid-liquid phase separation (LLPS) upon unfolded RNA-binding: functions as a molecular switch that triggers RNA-dependent LLPS in response to a rise in intracellular free RNA concentrations. Also acts as an ATP- and magnesium-dependent helicase: unwinds DNA/DNA, RNA/DNA, and RNA/RNA substrates with comparable efficiency. Acts unidirectionally by moving in the 5' to 3' direction along the bound single-stranded DNA. Unwinds preferentially partial DNA and RNA duplexes having a 17 bp annealed portion and either a hanging 3' tail or hanging tails at both 5'- and 3'-ends. Plays an essential role in innate immunity by promoting CGAS and RIGI activity. Participates in the DNA-triggered cGAS/STING pathway by promoting the DNA binding and activation of CGAS. Triggers the condensation of cGAS, a process probably linked to the formation of membrane-less organelles. Also enhances RIGI-induced type I interferon production probably by helping RIGI at sensing pathogenic RNA. May also act as a phosphorylation-dependent sequence-specific endoribonuclease in vitro: Cleaves exclusively between cytosine and adenine and cleaves MYC mRNA preferentially at the 3'-UTR. The protein is Ras GTPase-activating protein-binding protein 1 (G3BP1) of Bos taurus (Bovine).